The primary structure comprises 214 residues: Uracil phosphoribosyltransferase (214 aa).

Residues Arg107 and 135 to 143 each bind 5-phospho-alpha-D-ribose 1-diphosphate; that span reads DPMLATGKT. Residues Ile198 and 203 to 205 contribute to the uracil site; that span reads GDA. Asp204 serves as a coordination point for 5-phospho-alpha-D-ribose 1-diphosphate.

The protein belongs to the UPRTase family. Mg(2+) is required as a cofactor.

It carries out the reaction UMP + diphosphate = 5-phospho-alpha-D-ribose 1-diphosphate + uracil. Its pathway is pyrimidine metabolism; UMP biosynthesis via salvage pathway; UMP from uracil: step 1/1. Allosterically activated by GTP. Its function is as follows. Catalyzes the conversion of uracil and 5-phospho-alpha-D-ribose 1-diphosphate (PRPP) to UMP and diphosphate. In Aeropyrum pernix (strain ATCC 700893 / DSM 11879 / JCM 9820 / NBRC 100138 / K1), this protein is Uracil phosphoribosyltransferase.